Reading from the N-terminus, the 320-residue chain is Polyadenylate-binding protein-interacting protein 13 (320 aa).

Residues methionine 1–serine 44 are disordered. The span at aspartate 12–serine 44 shows a compositional bias: polar residues. The PAM2-like motif lies at histidine 65–proline 75. RRM domains follow at residues arginine 137–threonine 212 and lysine 234–threonine 310.

This is Polyadenylate-binding protein-interacting protein 13 (CID13) from Arabidopsis thaliana (Mouse-ear cress).